The chain runs to 428 residues: Serine--tRNA ligase (428 aa).

Residue 231-233 (TAE) coordinates L-serine. ATP-binding positions include 262 to 264 (RRE) and Val-278. Glu-285 serves as a coordination point for L-serine. Residue 349 to 352 (EVSS) participates in ATP binding. Residue Ser-384 coordinates L-serine.

Belongs to the class-II aminoacyl-tRNA synthetase family. Type-1 seryl-tRNA synthetase subfamily. As to quaternary structure, homodimer. The tRNA molecule binds across the dimer.

It is found in the cytoplasm. It catalyses the reaction tRNA(Ser) + L-serine + ATP = L-seryl-tRNA(Ser) + AMP + diphosphate + H(+). It carries out the reaction tRNA(Sec) + L-serine + ATP = L-seryl-tRNA(Sec) + AMP + diphosphate + H(+). It participates in aminoacyl-tRNA biosynthesis; selenocysteinyl-tRNA(Sec) biosynthesis; L-seryl-tRNA(Sec) from L-serine and tRNA(Sec): step 1/1. Catalyzes the attachment of serine to tRNA(Ser). Is also able to aminoacylate tRNA(Sec) with serine, to form the misacylated tRNA L-seryl-tRNA(Sec), which will be further converted into selenocysteinyl-tRNA(Sec). The polypeptide is Serine--tRNA ligase (Chlamydia trachomatis serovar L2 (strain ATCC VR-902B / DSM 19102 / 434/Bu)).